Reading from the N-terminus, the 141-residue chain is MAIERTLSIIKPDAVAKNVIGQIYTRFENAGLKIVASRMVHLSRADAEKFYAVHAARPFFKDLVDFMISGPVVVQALEGENAILKHRDLMGATDPKKAEKGTIRADFADSIDANAVHGSDAPETAAVEIAFFFPQVNVYSR.

Residues lysine 11, phenylalanine 59, arginine 87, threonine 93, arginine 104, and asparagine 114 each coordinate ATP. Residue histidine 117 is the Pros-phosphohistidine intermediate of the active site.

This sequence belongs to the NDK family. Homotetramer. Mg(2+) serves as cofactor.

It is found in the cytoplasm. The enzyme catalyses a 2'-deoxyribonucleoside 5'-diphosphate + ATP = a 2'-deoxyribonucleoside 5'-triphosphate + ADP. It catalyses the reaction a ribonucleoside 5'-diphosphate + ATP = a ribonucleoside 5'-triphosphate + ADP. In terms of biological role, major role in the synthesis of nucleoside triphosphates other than ATP. The ATP gamma phosphate is transferred to the NDP beta phosphate via a ping-pong mechanism, using a phosphorylated active-site intermediate. The protein is Nucleoside diphosphate kinase of Paraburkholderia xenovorans (strain LB400).